We begin with the raw amino-acid sequence, 499 residues long: Apolipoprotein N-acyltransferase (499 aa).

6 helical membrane-spanning segments follow: residues 18–38, 50–70, 82–102, 105–125, 156–176, and 182–202; these read FSPY…LIIT, LGFL…YISI, IIII…FVIL, FFFP…AWMI, PIIG…MCVL, and SYYP…LNFF. Residues 217–461 enclose the CN hydrolase domain; the sequence is IQGNISQHTY…NDFLLEEVFS (245 aa). Glu-257 functions as the Proton acceptor in the catalytic mechanism. Lys-320 is an active-site residue. The active-site Nucleophile is the Cys-372. A helical transmembrane segment spans residues 476-496; the sequence is LLFFSIICFIISFFIKIKLIF.

The protein belongs to the CN hydrolase family. Apolipoprotein N-acyltransferase subfamily.

It localises to the cell membrane. The catalysed reaction is N-terminal S-1,2-diacyl-sn-glyceryl-L-cysteinyl-[lipoprotein] + a glycerophospholipid = N-acyl-S-1,2-diacyl-sn-glyceryl-L-cysteinyl-[lipoprotein] + a 2-acyl-sn-glycero-3-phospholipid + H(+). It functions in the pathway protein modification; lipoprotein biosynthesis (N-acyl transfer). Functionally, catalyzes the phospholipid dependent N-acylation of the N-terminal cysteine of apolipoprotein, the last step in lipoprotein maturation. This Wigglesworthia glossinidia brevipalpis protein is Apolipoprotein N-acyltransferase.